A 776-amino-acid chain; its full sequence is MIRVYLIILMHLVIGLTQNNSTTPSPIITSSNSSVLVFEISSKMKMIEKKLEANTVHVLRLELDQSFILDLTKVAAEIVDSSKYSKEDGVILEVTVSNGRDSFLLKLPTVYPNLKLYTDGKLLNPLVEQDFGAHRKRHRIGDPHFHQNLIVTVQSRLNADIDYRLHVTHLDRAQYDFLKFKTGQTTKTLSNQKLTFVKPIGFFLNCSEQNISQFHVTLYSEDDICANLITVPANESIYDRSVISDKTHNRRVLSFTKRADIFFTETEISMFKSFRIFVFIAPDDSGCSTNTSRKSFNEKKKISFEFKKLENQSYAVPTALMMIFLTTPCLLFLPIVINIIKNSRKLAPSQSNLISFSPVPSEQRDMDLSHDEQQNTSSELENNGEIPAAENQIVEEITAENQETSVEEGNREIQVKIPLKQDSLSLHGQMLQYPVAIILPVLMHTAIEFHKWTTSTMANRDEMCFHNHACARPLGELRAWNNIITNIGYTLYGAIFIVLSICRRGRHEYSHVFGTYECTLLDVTIGVFMVLQSIASATYHICPSDVAFQFDTPCIQVICGLLMVRQWFVRHESPSPAYTNILLVGVVSLNFLISAFSKTSYVRFIIAVIHVIVVGSICLAKERSLGSEKLKTRFFIMAFSMGNFAAIVMYLTLSAFHLNQIATYCFIINCIMYLMYYGCMKVLHSERITSKAKLCGALSLLAWAVAGFFFFQDDTDWTRSAAASRALNKPCLLLGFFGSHDLWHIFGALAGLFTFIFVSFVDDDLINTRKTSINIF.

The N-terminal stretch at 1–17 (MIRVYLIILMHLVIGLT) is a signal peptide. The Extracellular segment spans residues 18 to 319 (QNNSTTPSPI…ENQSYAVPTA (302 aa)). Asn-19, Asn-20, Asn-32, Asn-205, Asn-210, Asn-234, Asn-290, and Asn-311 each carry an N-linked (GlcNAc...) asparagine glycan. The tract at residues 22-312 (TTPSPIITSS…SFEFKKLENQ (291 aa)) is involved in dsRNA-binding. A helical transmembrane segment spans residues 320–340 (LMMIFLTTPCLLFLPIVINII). The Cytoplasmic portion of the chain corresponds to 341-429 (KNSRKLAPSQ…KQDSLSLHGQ (89 aa)). A disordered region spans residues 360–390 (PSEQRDMDLSHDEQQNTSSELENNGEIPAAE). The segment covering 362-373 (EQRDMDLSHDEQ) has biased composition (basic and acidic residues). A helical membrane pass occupies residues 430–450 (MLQYPVAIILPVLMHTAIEFH). Residues 451-481 (KWTTSTMANRDEMCFHNHACARPLGELRAWN) lie on the Extracellular side of the membrane. A helical transmembrane segment spans residues 482-502 (NIITNIGYTLYGAIFIVLSIC). Over 503–510 (RRGRHEYS) the chain is Cytoplasmic. The helical transmembrane segment at 511-531 (HVFGTYECTLLDVTIGVFMVL) threads the bilayer. At 532–543 (QSIASATYHICP) the chain is on the extracellular side. A helical transmembrane segment spans residues 544-564 (SDVAFQFDTPCIQVICGLLMV). Residues 565 to 575 (RQWFVRHESPS) are Cytoplasmic-facing. Residues 576 to 596 (PAYTNILLVGVVSLNFLISAF) form a helical membrane-spanning segment. Residues 597-599 (SKT) are Extracellular-facing. Residues 600-620 (SYVRFIIAVIHVIVVGSICLA) form a helical membrane-spanning segment. Residues 621–633 (KERSLGSEKLKTR) are Cytoplasmic-facing. A helical membrane pass occupies residues 634 to 654 (FFIMAFSMGNFAAIVMYLTLS). At 655–659 (AFHLN) the chain is on the extracellular side. A helical membrane pass occupies residues 660–680 (QIATYCFIINCIMYLMYYGCM). Over 681 to 691 (KVLHSERITSK) the chain is Cytoplasmic. The chain crosses the membrane as a helical span at residues 692 to 712 (AKLCGALSLLAWAVAGFFFFQ). Over 713 to 741 (DDTDWTRSAAASRALNKPCLLLGFFGSHD) the chain is Extracellular. A helical transmembrane segment spans residues 742 to 762 (LWHIFGALAGLFTFIFVSFVD). Topologically, residues 763–776 (DDLINTRKTSINIF) are cytoplasmic.

The protein belongs to the SID1 family. May self-associate to form multimers. As to expression, expressed in most non-neuronal cells, including body wall muscle cells.

The protein resides in the cell membrane. Its function is as follows. Plays a role in RNA-mediated gene silencing by acting cell-autonomously as a channel for the transport of double-stranded RNA (dsRNA) between cells. Mediates the spread of dsRNA and subsequent silencing of genes in cells distant from the site of dsRNA introduction. Selective for dsRNA. Preferentially binds long dsRNA, from 50 base pairs up to 700. Short 20 base-pair long molecules are not bound. May also bind dsDNA, but with lower affinity. Binding may be sequence-independent. Required for avoidance behavior induced by small RNAs derived from pathogenic bacteria such as P.aeruginosa. In Caenorhabditis elegans, this protein is Systemic RNA interference defective protein 1.